A 474-amino-acid polypeptide reads, in one-letter code: tRNA-2-methylthio-N(6)-dimethylallyladenosine synthase (474 aa).

Residues 3–120 (KKLHIKTWGC…LPEMINSVRG (118 aa)) enclose the MTTase N-terminal domain. 6 residues coordinate [4Fe-4S] cluster: C12, C49, C83, C157, C161, and C164. The 233-residue stretch at 143-375 (RAEGPTAFVS…QERINQQAMA (233 aa)) folds into the Radical SAM core domain. The TRAM domain occupies 378–441 (RRMLGTVQRI…TNSLRGKIVR (64 aa)).

The protein belongs to the methylthiotransferase family. MiaB subfamily. As to quaternary structure, monomer. [4Fe-4S] cluster serves as cofactor.

The protein resides in the cytoplasm. It catalyses the reaction N(6)-dimethylallyladenosine(37) in tRNA + (sulfur carrier)-SH + AH2 + 2 S-adenosyl-L-methionine = 2-methylsulfanyl-N(6)-dimethylallyladenosine(37) in tRNA + (sulfur carrier)-H + 5'-deoxyadenosine + L-methionine + A + S-adenosyl-L-homocysteine + 2 H(+). Catalyzes the methylthiolation of N6-(dimethylallyl)adenosine (i(6)A), leading to the formation of 2-methylthio-N6-(dimethylallyl)adenosine (ms(2)i(6)A) at position 37 in tRNAs that read codons beginning with uridine. This is tRNA-2-methylthio-N(6)-dimethylallyladenosine synthase from Klebsiella pneumoniae subsp. pneumoniae (strain ATCC 700721 / MGH 78578).